A 264-amino-acid chain; its full sequence is ATP synthase subunit a (264 aa).

The next 6 helical transmembrane spans lie at 29–49 (TWHI…LWIF), 87–107 (NALI…MNFM), 134–154 (DVNI…YYSI), 177–197 (IPVN…SLAL), 208–228 (LIFI…SLGV), and 235–255 (LIFH…LTIV).

Belongs to the ATPase A chain family. As to quaternary structure, F-type ATPases have 2 components, CF(1) - the catalytic core - and CF(0) - the membrane proton channel. CF(1) has five subunits: alpha(3), beta(3), gamma(1), delta(1), epsilon(1). CF(0) has three main subunits: a(1), b(2) and c(9-12). The alpha and beta chains form an alternating ring which encloses part of the gamma chain. CF(1) is attached to CF(0) by a central stalk formed by the gamma and epsilon chains, while a peripheral stalk is formed by the delta and b chains.

It localises to the cell inner membrane. Its function is as follows. Key component of the proton channel; it plays a direct role in the translocation of protons across the membrane. The sequence is that of ATP synthase subunit a from Shewanella sp. (strain ANA-3).